The primary structure comprises 148 residues: Probable TtuB-protein conjugate cleaving protease (148 aa).

An MPN domain is found at 22 to 148 (HGLVLYVPRG…EGQEVALVVL (127 aa)). Glutamate 47 serves as the catalytic Proton donor/acceptor. Histidine 101, histidine 103, and aspartate 114 together coordinate Zn(2+). The JAMM motif motif lies at 101-114 (HSHPKGPALPSPRD).

The protein belongs to the peptidase M67B family. It depends on Zn(2+) as a cofactor.

Its function is as follows. Probable metalloprotease that cleaves the ubiquitin-like modifier protein TtuB from protein conjugates, hydrolyzing the isopeptide bond between a lysine residue of the target protein and the C-terminal glycine of the modifier protein. Does not seem to work for all the TtuB conjugates. The polypeptide is Probable TtuB-protein conjugate cleaving protease (Thermus thermophilus (strain ATCC BAA-163 / DSM 7039 / HB27)).